Reading from the N-terminus, the 180-residue chain is MDLSRIPPQPKAGILNVLIEIPAGSKNKYEFDKDLNAFALDRVLYSSVQYPYDYGFVPITNNLADDGDPLDGMVIMVPPTFPGVATARPIGMLQMVDGGDRDEKFLCVPAKDPRYTYVKSANDLAGHRLDEIFEFFRSYKNLFKKPTEFFGWKGDVAGLPLVEECVKNYYKTYCKNDHGK.

Substrate-binding residues include K28, R42, and Y54. Mg(2+) contacts are provided by D66, D71, and D102. Y139 provides a ligand contact to substrate.

This sequence belongs to the PPase family. Homohexamer. Requires Mg(2+) as cofactor.

It is found in the cytoplasm. It carries out the reaction diphosphate + H2O = 2 phosphate + H(+). Its function is as follows. Hydrolyzes PPi generated in anabolic reactions. Functionally, catalyzes the hydrolysis of inorganic pyrophosphate (PPi) forming two phosphate ions. This chain is Inorganic pyrophosphatase, found in Pseudanabaena sp. (strain PCC 6903).